A 534-amino-acid chain; its full sequence is Cytochalasin cluster regulator ccsR (534 aa).

The zn(2)-C6 fungal-type DNA-binding region spans 13–54 (CDRCRRQKLRCVRPLKHGACEHPNNIEALEPCERCSRAGTPC). Disordered regions lie at residues 88–170 (IPKQ…LDAP) and 350–378 (TSAR…SAAS). A compositionally biased stretch (polar residues) spans 109 to 125 (TGQNKGINDANAVTGSL). Basic and acidic residues predominate over residues 130–146 (PDHRSGSNVHRQPEARP). Low complexity predominate over residues 361 to 378 (DMCASSSNRDSSDLSAAS).

The protein localises to the nucleus. In terms of biological role, transcription factor involved in regulation of gene cluster that mediates the biosynthesis of the mycotoxins cytochalasins E and K. The polypeptide is Cytochalasin cluster regulator ccsR (Aspergillus clavatus (strain ATCC 1007 / CBS 513.65 / DSM 816 / NCTC 3887 / NRRL 1 / QM 1276 / 107)).